A 169-amino-acid polypeptide reads, in one-letter code: Phosphopantetheine adenylyltransferase (169 aa).

Thr-9 is a substrate binding site. Residues 9 to 10 (TF) and His-17 each bind ATP. Substrate-binding residues include Lys-41, Leu-73, and Arg-87. ATP-binding positions include 88–90 (GLR), Glu-98, and 123–129 (YQFISGT).

This sequence belongs to the bacterial CoaD family. In terms of assembly, homohexamer. It depends on Mg(2+) as a cofactor.

The protein resides in the cytoplasm. It carries out the reaction (R)-4'-phosphopantetheine + ATP + H(+) = 3'-dephospho-CoA + diphosphate. It participates in cofactor biosynthesis; coenzyme A biosynthesis; CoA from (R)-pantothenate: step 4/5. Its function is as follows. Reversibly transfers an adenylyl group from ATP to 4'-phosphopantetheine, yielding dephospho-CoA (dPCoA) and pyrophosphate. The sequence is that of Phosphopantetheine adenylyltransferase from Bordetella bronchiseptica (strain ATCC BAA-588 / NCTC 13252 / RB50) (Alcaligenes bronchisepticus).